Reading from the N-terminus, the 408-residue chain is NADH-quinone oxidoreductase subunit D (408 aa).

Belongs to the complex I 49 kDa subunit family. In terms of assembly, NDH-1 is composed of 14 different subunits. Subunits NuoB, C, D, E, F, and G constitute the peripheral sector of the complex.

Its subcellular location is the cell inner membrane. The catalysed reaction is a quinone + NADH + 5 H(+)(in) = a quinol + NAD(+) + 4 H(+)(out). NDH-1 shuttles electrons from NADH, via FMN and iron-sulfur (Fe-S) centers, to quinones in the respiratory chain. The immediate electron acceptor for the enzyme in this species is believed to be ubiquinone. Couples the redox reaction to proton translocation (for every two electrons transferred, four hydrogen ions are translocated across the cytoplasmic membrane), and thus conserves the redox energy in a proton gradient. The polypeptide is NADH-quinone oxidoreductase subunit D (Campylobacter jejuni subsp. jejuni serotype O:6 (strain 81116 / NCTC 11828)).